Consider the following 293-residue polypeptide: Elongation factor Ts (293 aa).

The interval 81–84 (TDFV) is involved in Mg(2+) ion dislocation from EF-Tu.

This sequence belongs to the EF-Ts family.

The protein localises to the cytoplasm. In terms of biological role, associates with the EF-Tu.GDP complex and induces the exchange of GDP to GTP. It remains bound to the aminoacyl-tRNA.EF-Tu.GTP complex up to the GTP hydrolysis stage on the ribosome. The protein is Elongation factor Ts of Thioalkalivibrio sulfidiphilus (strain HL-EbGR7).